The primary structure comprises 416 residues: 4-hydroxy-3-methylbut-2-en-1-yl diphosphate synthase (flavodoxin) (416 aa).

[4Fe-4S] cluster is bound by residues C304, C307, C350, and E357.

It belongs to the IspG family. Requires [4Fe-4S] cluster as cofactor.

The enzyme catalyses (2E)-4-hydroxy-3-methylbut-2-enyl diphosphate + oxidized [flavodoxin] + H2O + 2 H(+) = 2-C-methyl-D-erythritol 2,4-cyclic diphosphate + reduced [flavodoxin]. Its pathway is isoprenoid biosynthesis; isopentenyl diphosphate biosynthesis via DXP pathway; isopentenyl diphosphate from 1-deoxy-D-xylulose 5-phosphate: step 5/6. Functionally, converts 2C-methyl-D-erythritol 2,4-cyclodiphosphate (ME-2,4cPP) into 1-hydroxy-2-methyl-2-(E)-butenyl 4-diphosphate. The polypeptide is 4-hydroxy-3-methylbut-2-en-1-yl diphosphate synthase (flavodoxin) (Rhizobium johnstonii (strain DSM 114642 / LMG 32736 / 3841) (Rhizobium leguminosarum bv. viciae)).